The sequence spans 115 residues: Transmembrane protein 218 (115 aa).

3 helical membrane-spanning segments follow: residues 5–25 (VLGVGAGVFLLALIWVLVLLL), 38–58 (FSIVFVFLGALIITTVLLLFP), and 81–101 (YVLLAFLSAVFLGGLFLLLTH).

It belongs to the TMEM218 family. As to quaternary structure, interacts with TMEM67.

It localises to the membrane. It is found in the cell projection. The protein resides in the cilium. May be involved in ciliary biogenesis or function. In Mus musculus (Mouse), this protein is Transmembrane protein 218 (Tmem218).